Here is a 183-residue protein sequence, read N- to C-terminus: NADH-quinone oxidoreductase subunit A (183 aa).

3 helical membrane-spanning segments follow: residues 11 to 31 (IIAF…VPLL), 63 to 83 (FYLV…LYAW), and 98 to 118 (VVIF…VGAL). The disordered stretch occupies residues 159 to 183 (TGQIPAQSSGRVKSKTTPALSSEKE).

This sequence belongs to the complex I subunit 3 family. As to quaternary structure, NDH-1 is composed of 14 different subunits. Subunits NuoA, H, J, K, L, M, N constitute the membrane sector of the complex.

It is found in the cell inner membrane. The catalysed reaction is a quinone + NADH + 5 H(+)(in) = a quinol + NAD(+) + 4 H(+)(out). In terms of biological role, NDH-1 shuttles electrons from NADH, via FMN and iron-sulfur (Fe-S) centers, to quinones in the respiratory chain. The immediate electron acceptor for the enzyme in this species is believed to be ubiquinone. Couples the redox reaction to proton translocation (for every two electrons transferred, four hydrogen ions are translocated across the cytoplasmic membrane), and thus conserves the redox energy in a proton gradient. The chain is NADH-quinone oxidoreductase subunit A from Acinetobacter baumannii (strain AYE).